Consider the following 649-residue polypeptide: DNA ligase (649 aa).

NAD(+)-binding positions include D62–D66 and S104–T105. K142 serves as the catalytic N6-AMP-lysine intermediate. Residues R158, E189, and K301 each contribute to the NAD(+) site. Positions 389, 392, 405, and 411 each coordinate Zn(2+). Positions P569–Y649 constitute a BRCT domain.

This sequence belongs to the NAD-dependent DNA ligase family. LigA subfamily. The cofactor is Mg(2+). Mn(2+) serves as cofactor.

The catalysed reaction is NAD(+) + (deoxyribonucleotide)n-3'-hydroxyl + 5'-phospho-(deoxyribonucleotide)m = (deoxyribonucleotide)n+m + AMP + beta-nicotinamide D-nucleotide.. In terms of biological role, DNA ligase that catalyzes the formation of phosphodiester linkages between 5'-phosphoryl and 3'-hydroxyl groups in double-stranded DNA using NAD as a coenzyme and as the energy source for the reaction. It is essential for DNA replication and repair of damaged DNA. This is DNA ligase from Psychromonas ingrahamii (strain DSM 17664 / CCUG 51855 / 37).